A 235-amino-acid chain; its full sequence is Ribonuclease PH (235 aa).

Residues Arg-86 and 124–126 (GTR) each bind phosphate.

This sequence belongs to the RNase PH family. Homohexameric ring arranged as a trimer of dimers.

It catalyses the reaction tRNA(n+1) + phosphate = tRNA(n) + a ribonucleoside 5'-diphosphate. In terms of biological role, phosphorolytic 3'-5' exoribonuclease that plays an important role in tRNA 3'-end maturation. Removes nucleotide residues following the 3'-CCA terminus of tRNAs; can also add nucleotides to the ends of RNA molecules by using nucleoside diphosphates as substrates, but this may not be physiologically important. Probably plays a role in initiation of 16S rRNA degradation (leading to ribosome degradation) during starvation. In Francisella tularensis subsp. holarctica (strain FTNF002-00 / FTA), this protein is Ribonuclease PH.